A 361-amino-acid chain; its full sequence is Glutamine synthetase (361 aa).

The GS beta-grasp domain occupies 23 to 103 (CQAMYIWVDG…VLCETYKYNK (81 aa)). Residues 110 to 361 (QRWKCMEVMT…LVRTICLNEQ (252 aa)) enclose the GS catalytic domain. An ATP-binding site is contributed by Glu131. Mn(2+)-binding residues include Glu131, Glu133, and Glu200. 200–205 (EFQVGP) provides a ligand contact to ATP. 243–244 (DW) is a binding site for L-glutamate. His250 is a binding site for Mn(2+). Residues 252 to 254 (NFS), Arg316, and Arg321 contribute to the ATP site. Arg316 contacts L-glutamate. 333–335 (YLE) contributes to the ADP binding site. Glu335 contributes to the Mn(2+) binding site. Arg337 provides a ligand contact to L-glutamate.

It belongs to the glutamine synthetase family. Requires Mg(2+) as cofactor. Mn(2+) serves as cofactor.

It is found in the cytoplasm. The protein resides in the cytosol. The protein localises to the microsome. Its subcellular location is the mitochondrion. The catalysed reaction is L-glutamate + NH4(+) + ATP = L-glutamine + ADP + phosphate + H(+). Its function is as follows. Glutamine synthetase that catalyzes the ATP-dependent conversion of glutamate and ammonia to glutamine. This is Glutamine synthetase from Panulirus argus (Caribbean spiny lobster).